Reading from the N-terminus, the 165-residue chain is Destrin (165 aa).

An N-acetylalanine modification is found at alanine 2. Serine 3 carries the phosphoserine modification. In terms of domain architecture, ADF-H spans 4-153 (GVQVADEVCR…NRTCIAEKLG (150 aa)). Lysine 19 carries the post-translational modification N6-acetyllysine. Positions 30–34 (KKRKK) match the Nuclear localization signal motif.

It belongs to the actin-binding proteins ADF family. Post-translationally, ISGylated. Widely expressed. Not found in skeletal muscle.

In terms of biological role, actin-depolymerizing protein. Severs actin filaments (F-actin) and binds to actin monomers (G-actin). Acts in a pH-independent manner. In Mus musculus (Mouse), this protein is Destrin (Dstn).